The sequence spans 165 residues: Short form salivary protein D7R1 (165 aa).

A signal peptide spans 1 to 21 (MFNKLHLVSLLACGLFVIAQA). Cystine bridges form between Cys27–Cys59, Cys40–Cys164, and Cys98–Cys117. The serotonin site is built by Glu28, His56, Tyr115, Asp132, and Glu135. Residues Tyr115, Asp132, and Glu135 each contribute to the histamine site.

The protein belongs to the PBP/GOBP family. As to expression, female salivary gland. Not detected in female carcass without salivary glands. Not detected in male tissues.

The protein resides in the secreted. Modulates blood feeding of female mosquitoes on vertebrate species by binding and sequestering different mediators involved in the host response. Binds serotonin and histamine. Increases blood clotting time. This Anopheles gambiae (African malaria mosquito) protein is Short form salivary protein D7R1.